Here is a 148-residue protein sequence, read N- to C-terminus: 3-hydroxyacyl-[acyl-carrier-protein] dehydratase FabZ (148 aa).

H48 is a catalytic residue.

Belongs to the thioester dehydratase family. FabZ subfamily.

Its subcellular location is the cytoplasm. The enzyme catalyses a (3R)-hydroxyacyl-[ACP] = a (2E)-enoyl-[ACP] + H2O. In terms of biological role, involved in unsaturated fatty acids biosynthesis. Catalyzes the dehydration of short chain beta-hydroxyacyl-ACPs and long chain saturated and unsaturated beta-hydroxyacyl-ACPs. The protein is 3-hydroxyacyl-[acyl-carrier-protein] dehydratase FabZ of Nitratiruptor sp. (strain SB155-2).